The primary structure comprises 421 residues: Serine--tRNA ligase (421 aa).

An L-serine-binding site is contributed by threonine 229 to glutamate 231. Arginine 260–glutamate 262 provides a ligand contact to ATP. Glutamate 283 is an L-serine binding site. ATP is bound at residue glutamate 347–serine 350. Serine 383 provides a ligand contact to L-serine.

The protein belongs to the class-II aminoacyl-tRNA synthetase family. Type-1 seryl-tRNA synthetase subfamily. In terms of assembly, homodimer. The tRNA molecule binds across the dimer.

The protein resides in the cytoplasm. The catalysed reaction is tRNA(Ser) + L-serine + ATP = L-seryl-tRNA(Ser) + AMP + diphosphate + H(+). The enzyme catalyses tRNA(Sec) + L-serine + ATP = L-seryl-tRNA(Sec) + AMP + diphosphate + H(+). It functions in the pathway aminoacyl-tRNA biosynthesis; selenocysteinyl-tRNA(Sec) biosynthesis; L-seryl-tRNA(Sec) from L-serine and tRNA(Sec): step 1/1. In terms of biological role, catalyzes the attachment of serine to tRNA(Ser). Is also able to aminoacylate tRNA(Sec) with serine, to form the misacylated tRNA L-seryl-tRNA(Sec), which will be further converted into selenocysteinyl-tRNA(Sec). The sequence is that of Serine--tRNA ligase from Desulfitobacterium hafniense (strain Y51).